A 96-amino-acid polypeptide reads, in one-letter code: MNYIVLAAIVFTIGAVGVLVRRNAIIVFMCVELMLNACNLAFVAFARMHGGIEGQVIAFFVMVVAAAEVVVGLAIIMQIFRTRRSASIDDANLLKN.

The next 3 helical transmembrane spans lie at 1–21 (MNYI…VLVR), 25–45 (IIVF…FVAF), and 56–76 (VIAF…LAII).

It belongs to the complex I subunit 4L family. NDH-1 is composed of 14 different subunits. Subunits NuoA, H, J, K, L, M, N constitute the membrane sector of the complex.

The protein localises to the cell membrane. The catalysed reaction is a quinone + NADH + 5 H(+)(in) = a quinol + NAD(+) + 4 H(+)(out). NDH-1 shuttles electrons from NADH, via FMN and iron-sulfur (Fe-S) centers, to quinones in the respiratory chain. The immediate electron acceptor for the enzyme in this species is believed to be a menaquinone. Couples the redox reaction to proton translocation (for every two electrons transferred, four hydrogen ions are translocated across the cytoplasmic membrane), and thus conserves the redox energy in a proton gradient. This chain is NADH-quinone oxidoreductase subunit K, found in Thermobifida fusca (strain YX).